Here is a 100-residue protein sequence, read N- to C-terminus: SAGA-associated factor 11 (100 aa).

An SGF11-type zinc finger spans residues 73–94 (FQCENCGRSIAGGRFAQHMTKC).

Belongs to the SGF11 family. As to quaternary structure, component of the 1.8 MDa SAGA transcription coactivator-HAT complex. SAGA is built of 5 distinct domains with specialized functions. Within the SAGA complex, SUS1, SGF11, SGF73 and UBP8 form an additional subcomplex of SAGA called the DUB module (deubiquitination module). Interacts directly with SGF73, SUS1 and UBP8.

It is found in the nucleus. In terms of biological role, functions as a component of the transcription regulatory histone acetylation (HAT) complex SAGA. At the promoters, SAGA is required for recruitment of the basal transcription machinery. It influences RNA polymerase II transcriptional activity through different activities such as TBP interaction and promoter selectivity, interaction with transcription activators, and chromatin modification through histone acetylation and deubiquitination. SAGA acetylates nucleosomal histone H3 to some extent (to form H3K9ac, H3K14ac, H3K18ac and H3K23ac). SAGA interacts with DNA via upstream activating sequences (UASs). Involved in transcriptional regulation of a subset of SAGA-regulated genes. Within the SAGA complex, participates in a subcomplex, that specifically deubiquitinates histones H2B. This is SAGA-associated factor 11 from Debaryomyces hansenii (strain ATCC 36239 / CBS 767 / BCRC 21394 / JCM 1990 / NBRC 0083 / IGC 2968) (Yeast).